Reading from the N-terminus, the 301-residue chain is Heme A synthase (301 aa).

Residues 1-7 (MHKGLKR) are Cytoplasmic-facing. The chain crosses the membrane as a helical span at residues 8-28 (LGVITSLGVLLVLIQGALVTN). The Extracellular portion of the chain corresponds to 29-56 (TGSGEGCGQTWPLCFGQVIPLDPPPETV). A disulfide bond links C35 and C42. The helical transmembrane segment at 57 to 77 (IEFSHRLVAGIVGMLVILMAI) threads the bilayer. E58 is a catalytic residue. H61 is a binding site for heme o. Topologically, residues 78–92 (WSWRRLKHMPETRFL) are cytoplasmic. Residues 93–113 (AVISVFMIIFQGLLGAGAVVF) form a helical membrane-spanning segment. The Extracellular segment spans residues 114 to 117 (GQSD). A helical membrane pass occupies residues 118–138 (LIMALHFGFSALSFASVVLLT). H123 serves as a coordination point for heme o. Topologically, residues 139-159 (RLAFEDSNPQKQYAPIVSKAY) are cytoplasmic. Residues 160-180 (KGYVIFVAIYSYVAIYTGAYV) form a helical membrane-spanning segment. At 181 to 215 (KHTNATLACSGFPLCNGQWVPDVFTEAIGVQLLHR) the chain is on the extracellular side. C189 and C195 are disulfide-bonded. Heme b is bound at residue H214. Residues 216-236 (SAAILLSLLLLVLFIWTVKTF) traverse the membrane as a helical segment. Residues 237–240 (RASR) are Cytoplasmic-facing. The helical transmembrane segment at 241-261 (VLVVCASLAMLLVIGQAASGV) threads the bilayer. The Extracellular segment spans residues 262–274 (AVVLTYNATLTLG). Residues 275–295 (IFHALLISLLFTLLCYMVMLV) form a helical membrane-spanning segment. H277 contributes to the heme b binding site. The Cytoplasmic portion of the chain corresponds to 296 to 301 (TRHKAK).

It belongs to the COX15/CtaA family. Type 1 subfamily. In terms of assembly, interacts with CtaB. It depends on heme b as a cofactor.

The protein resides in the cell membrane. It catalyses the reaction Fe(II)-heme o + 2 A + H2O = Fe(II)-heme a + 2 AH2. The protein operates within porphyrin-containing compound metabolism; heme A biosynthesis; heme A from heme O: step 1/1. Functionally, catalyzes the conversion of heme O to heme A by two successive hydroxylations of the methyl group at C8. The first hydroxylation forms heme I, the second hydroxylation results in an unstable dihydroxymethyl group, which spontaneously dehydrates, resulting in the formyl group of heme A. This is Heme A synthase from Shouchella clausii (strain KSM-K16) (Alkalihalobacillus clausii).